Reading from the N-terminus, the 379-residue chain is Cytochrome b (379 aa).

4 helical membrane-spanning segments follow: residues 34–54, 78–100, 113–133, and 179–199; these read YGSL…MLAM, WMIR…VHIG, TWNI…LGYV, and FFSL…IHLL. Heme b-binding residues include His84 and His98. Heme b is bound by residues His183 and His197. His202 contributes to the a ubiquinone binding site. 4 consecutive transmembrane segments (helical) span residues 225–245, 289–309, 320–340, and 345–365; these read FSIK…FLVL, LGGV…PIFS, WSGM…WIGA, and APYI…FFWM.

Belongs to the cytochrome b family. The main subunits of complex b-c1 are: cytochrome b, cytochrome c1 and the Rieske protein. It depends on heme b as a cofactor.

It is found in the mitochondrion inner membrane. Functionally, component of the ubiquinol-cytochrome c reductase complex (complex III or cytochrome b-c1 complex) that is part of the mitochondrial respiratory chain. The b-c1 complex mediates electron transfer from ubiquinol to cytochrome c. Contributes to the generation of a proton gradient across the mitochondrial membrane that is then used for ATP synthesis. The chain is Cytochrome b (mt:Cyt-b) from Epiperipatus biolleyi (Velvet worm).